The chain runs to 901 residues: Protein translocase subunit SecA (901 aa).

Residues glutamine 87, 105-109 (GEGKT), and aspartate 512 contribute to the ATP site. A disordered region spans residues 859-901 (HQDDDSAAAAALAAQTGERKVGRNDPCPCGSGKKYKQCHGRLQ). 4 residues coordinate Zn(2+): cysteine 885, cysteine 887, cysteine 896, and histidine 897. Residues 891 to 901 (KKYKQCHGRLQ) show a composition bias toward basic residues.

It belongs to the SecA family. As to quaternary structure, monomer and homodimer. Part of the essential Sec protein translocation apparatus which comprises SecA, SecYEG and auxiliary proteins SecDF-YajC and YidC. Zn(2+) serves as cofactor.

The protein resides in the cell inner membrane. It localises to the cytoplasm. It carries out the reaction ATP + H2O + cellular proteinSide 1 = ADP + phosphate + cellular proteinSide 2.. In terms of biological role, part of the Sec protein translocase complex. Interacts with the SecYEG preprotein conducting channel. Has a central role in coupling the hydrolysis of ATP to the transfer of proteins into and across the cell membrane, serving both as a receptor for the preprotein-SecB complex and as an ATP-driven molecular motor driving the stepwise translocation of polypeptide chains across the membrane. The protein is Protein translocase subunit SecA of Escherichia coli (strain 55989 / EAEC).